We begin with the raw amino-acid sequence, 313 residues long: Apolipoprotein E (313 aa).

An N-terminal signal peptide occupies residues Met-1–Ala-18. 8 consecutive repeat copies span residues Val-79 to Gly-100, Pro-101 to Ala-122, Ser-123 to Gly-144, Gln-145 to Leu-166, Arg-167 to Glu-188, Arg-189 to Ala-209, Gly-210 to Arg-229, and Gly-230 to Glu-251. The 8 X 22 AA approximate tandem repeats stretch occupies residues Val-79–Glu-251. The tract at residues His-157–Arg-167 is LDL and other lipoprotein receptors binding. Leu-161–Arg-164 is a heparin binding site. Positions Ala-209–Met-286 are lipid-binding and lipoprotein association. His-225–Val-232 serves as a coordination point for heparin. The interval Ser-262 to His-313 is homooligomerization. A specificity for association with VLDL region spans residues Arg-274–Met-286.

This sequence belongs to the apolipoprotein A1/A4/E family. In terms of assembly, homotetramer. May interact with ABCA1; functionally associated with ABCA1 in the biogenesis of HDLs. May interact with APP/A4 amyloid-beta peptide; the interaction is extremely stable in vitro but its physiological significance is unclear. May interact with MAPT. May interact with MAP2. In the cerebrospinal fluid, interacts with secreted SORL1. Interacts with PMEL; this allows the loading of PMEL luminal fragment on ILVs to induce fibril nucleation. In terms of processing, APOE exists as multiple glycosylated and sialylated glycoforms within cells and in plasma. The extent of glycosylation and sialylation are tissue and context specific. Post-translationally, glycated in plasma VLDL. Phosphorylated by FAM20C in the extracellular medium.

It localises to the secreted. The protein resides in the extracellular space. Its subcellular location is the extracellular matrix. The protein localises to the extracellular vesicle. It is found in the endosome. It localises to the multivesicular body. Functionally, APOE is an apolipoprotein, a protein associating with lipid particles, that mainly functions in lipoprotein-mediated lipid transport between organs via the plasma and interstitial fluids. APOE is a core component of plasma lipoproteins and is involved in their production, conversion and clearance. Apolipoproteins are amphipathic molecules that interact both with lipids of the lipoprotein particle core and the aqueous environment of the plasma. As such, APOE associates with chylomicrons, chylomicron remnants, very low density lipoproteins (VLDL) and intermediate density lipoproteins (IDL) but shows a preferential binding to high-density lipoproteins (HDL). It also binds a wide range of cellular receptors including the LDL receptor/LDLR and the very low-density lipoprotein receptor/VLDLR that mediate the cellular uptake of the APOE-containing lipoprotein particles. Finally, APOE also has a heparin-binding activity and binds heparan-sulfate proteoglycans on the surface of cells, a property that supports the capture and the receptor-mediated uptake of APOE-containing lipoproteins by cells. The sequence is that of Apolipoprotein E (APOE) from Balaenoptera acutorostrata scammoni (North Pacific minke whale).